We begin with the raw amino-acid sequence, 252 residues long: 5'-nucleotidase SurE (252 aa).

A divalent metal cation is bound by residues D8, D9, S39, and N91.

Belongs to the SurE nucleotidase family. It depends on a divalent metal cation as a cofactor.

The protein localises to the cytoplasm. It catalyses the reaction a ribonucleoside 5'-phosphate + H2O = a ribonucleoside + phosphate. Functionally, nucleotidase that shows phosphatase activity on nucleoside 5'-monophosphates. The protein is 5'-nucleotidase SurE of Bordetella petrii (strain ATCC BAA-461 / DSM 12804 / CCUG 43448).